We begin with the raw amino-acid sequence, 325 residues long: tRNA uridine(34) hydroxylase (325 aa).

Positions 122-218 constitute a Rhodanese domain; sequence EENRCLVLDV…YGQAMGTGKW (97 aa). The active-site Cysteine persulfide intermediate is C178.

This sequence belongs to the TrhO family.

It catalyses the reaction uridine(34) in tRNA + AH2 + O2 = 5-hydroxyuridine(34) in tRNA + A + H2O. Functionally, catalyzes oxygen-dependent 5-hydroxyuridine (ho5U) modification at position 34 in tRNAs. The polypeptide is tRNA uridine(34) hydroxylase (Chlamydia felis (strain Fe/C-56) (Chlamydophila felis)).